The following is a 544-amino-acid chain: Lariat debranching enzyme (544 aa).

4 residues coordinate a divalent metal cation: Cys-8, His-10, Asp-39, and Asn-84. A lariat recognition loop region spans residues 124–154; that stretch reads SGIFKSHDYRKGHFECPPYNSSTIRSIYHVR. Lys-128 is subject to N6-acetyllysine. His-174, His-226, and His-228 together coordinate a divalent metal cation. The span at 395–412 shows a compositional bias: acidic residues; the sequence is EYEEQDDVESNDSGEDQS. The segment at 395 to 463 is disordered; sequence EYEEQDDVES…PSDQASEFSA (69 aa). The segment covering 413–425 has biased composition (polar residues); that stretch reads EYNTDTSALSSIN. A compositionally biased stretch (acidic residues) spans 429–439; the sequence is IMLDEEEDEDS. Residues 445-463 show a composition bias toward polar residues; it reads SGMNTPSVEPSDQASEFSA. Phosphoserine is present on residues Ser-464, Ser-474, Ser-478, Ser-479, Ser-485, Ser-499, and Ser-514. The disordered stretch occupies residues 476-544; the sequence is IVSSDDTVDS…AVDDDDDDAA (69 aa). A compositionally biased stretch (basic and acidic residues) spans 512–522; it reads RLSDEHEPEQR.

Belongs to the lariat debranching enzyme family. The cofactor is Fe(2+). It depends on Zn(2+) as a cofactor. Mn(2+) is required as a cofactor. Ubiquitously expressed, strongest expression in the spinal cord and brainstem.

The protein resides in the nucleus. Its activity is regulated as follows. Active in presence of diverse metals including Fe(2+), Zn(2+), Mn(2+). Also activated by Ca(2+). Binds two metal cations in two adjacent alpha and beta metal-binding pockets. Its function is as follows. Cleaves the 2'-5' phosphodiester linkage at the branch point of excised lariat intron RNA and converts them into linear molecules that can be subsequently degraded, thereby facilitating ribonucleotide turnover. Linked to its role in pre-mRNA processing mechanism, may also participate in retrovirus replication via an RNA lariat intermediate in cDNA synthesis and have an antiviral cell-intrinsic defense function in the brainstem. This chain is Lariat debranching enzyme (DBR1), found in Homo sapiens (Human).